A 185-amino-acid polypeptide reads, in one-letter code: MLNQIKKDAQDRMEKSLEALKGHISKIRTGRAQPSLLDAIQVEYYGAATPLRQLANVVAEDARTLAVTVFDRSLISAVEKAILTSDLGLNPSSAGTTIRVPLPPLTEERRRDLIKIVKGEGEQGKVAVRNVRRDANDKIKALLKDKEISENEQHKAEEEIQKITDIYIKKVDEVLADKEKELMDF.

Belongs to the RRF family.

The protein localises to the cytoplasm. Its function is as follows. Responsible for the release of ribosomes from messenger RNA at the termination of protein biosynthesis. May increase the efficiency of translation by recycling ribosomes from one round of translation to another. The protein is Ribosome-recycling factor of Haemophilus influenzae (strain ATCC 51907 / DSM 11121 / KW20 / Rd).